A 760-amino-acid polypeptide reads, in one-letter code: MOXD1 homolog 2 (760 aa).

Residues 1-34 are disordered; it reads MAHPRKAVATPATLQLGPPAQTAQSPAATLRHSR. Residues 18–34 show a composition bias toward low complexity; that stretch reads PPAQTAQSPAATLRHSR. Residues 47–67 traverse the membrane as a helical segment; that stretch reads CFISCHTFNLFLLLLLLASGV. Residues N78, N198, and N223 are each glycosylated (N-linked (GlcNAc...) asparagine). In terms of domain architecture, DOMON spans 117-233; that stretch reads DDFRILWQII…DTMRLLYMYH (117 aa). Cystine bridges form between C339-C367, C467-C581, and C543-C565. The N-linked (GlcNAc...) asparagine glycan is linked to N668. Residues 678–701 are disordered; that stretch reads RCKPKRPLAPPTERTAPPPASDLS. The helical transmembrane segment at 740 to 760 threads the bilayer; the sequence is FISCLLWLGASSWWLLLMLRT.

The protein belongs to the copper type II ascorbate-dependent monooxygenase family.

Its subcellular location is the membrane. The polypeptide is MOXD1 homolog 2 (olf413) (Drosophila melanogaster (Fruit fly)).